Here is a 303-residue protein sequence, read N- to C-terminus: Coenzyme PQQ synthesis protein B (303 aa).

This sequence belongs to the PqqB family.

It participates in cofactor biosynthesis; pyrroloquinoline quinone biosynthesis. Its function is as follows. May be involved in the transport of PQQ or its precursor to the periplasm. This is Coenzyme PQQ synthesis protein B from Acinetobacter baumannii (strain AYE).